The chain runs to 393 residues: MRDTPLSNCERLFLLKAIKEKKRLDGRQTYDYRNIKISFGTDYGCCVVELGKTRVLSQVSCELVPPKDSRPTEGIVFFNLELSPMASPAFEPNRQSELLVTLNRQLERCLRNSKCIDTESLCVVSGEKVWQIRVDVHVLNHDGNLMDAASIAAISALSHFRRPDVAIQGRDVTVFGPEERDPIPLSIYHMPICVSFAFFLQGSFLLVDPCEREERVKDGLLVIAMNKHREICSIQSSGGIMLLKEQVLRCSKIASVKVSEITELINKALENDKKVRKEGGKFGFAESMPKERITTLKRDEAPVEMTDVKETADDIVQRTETTTETVPSPILVATGTAQIGEGIVNSWGLDEDEDDELQTEDRKTDEVVVITDSEEEEVVILNDQKSKKTSKQK.

The segment at 1-268 is ARE binding; it reads MRDTPLSNCE…SEITELINKA (268 aa).

The protein belongs to the RNase PH family. As to quaternary structure, component of the RNA exosome complex.

The protein localises to the cytoplasm. It localises to the nucleus. It is found in the nucleolus. Its subcellular location is the nucleoplasm. Non-catalytic component of the RNA exosome complex which has 3'-&gt;5' exoribonuclease activity and participates in a multitude of cellular RNA processing and degradation events. In the nucleus, the RNA exosome complex is involved in proper maturation of stable RNA species such as rRNA, snRNA and snoRNA, in the elimination of RNA processing by-products and non-coding 'pervasive' transcripts, such as antisense RNA species and promoter-upstream transcripts (PROMPTs), and of mRNAs with processing defects, thereby limiting or excluding their export to the cytoplasm. In the cytoplasm, the RNA exosome complex is involved in general mRNA turnover and specifically degrades inherently unstable mRNAs containing AU-rich elements (AREs) within their 3' untranslated regions, and in RNA surveillance pathways, preventing translation of aberrant mRNAs. This is Exosome complex component RRP45 from Danio rerio (Zebrafish).